Here is a 226-residue protein sequence, read N- to C-terminus: MSTGIEATWLGAADYAATYGAMKQFTLERLPETPDALWICEHAPVFTQGIAGRQDHILNPGAIPVVQTDRGGQVTFHGPGQVVAYPLIDLRRAGYFVKEYVYRIEESVLRTLAHFGVTGHRVAGAPGIYVRLDDPFSHAALTGPLPAGDPFRGLGKIAALGIKVSRHATYHGVALNVAMDLEPFSRINPCGYAGLQTVDLSTIGVQTTWEEAARVLSQKLGTYLAP.

One can recognise a BPL/LPL catalytic domain in the interval 31–226 (PETPDALWIC…SQKLGTYLAP (196 aa)). Substrate-binding positions include 70 to 77 (RGGQVTFH), 159 to 161 (ALG), and 172 to 174 (GVA). The Acyl-thioester intermediate role is filled by Cys190.

This sequence belongs to the LipB family.

It is found in the cytoplasm. It carries out the reaction octanoyl-[ACP] + L-lysyl-[protein] = N(6)-octanoyl-L-lysyl-[protein] + holo-[ACP] + H(+). Its pathway is protein modification; protein lipoylation via endogenous pathway; protein N(6)-(lipoyl)lysine from octanoyl-[acyl-carrier-protein]: step 1/2. In terms of biological role, catalyzes the transfer of endogenously produced octanoic acid from octanoyl-acyl-carrier-protein onto the lipoyl domains of lipoate-dependent enzymes. Lipoyl-ACP can also act as a substrate although octanoyl-ACP is likely to be the physiological substrate. The protein is Octanoyltransferase of Variovorax paradoxus (strain S110).